The chain runs to 372 residues: tRNA N6-adenosine threonylcarbamoyltransferase (372 aa).

A divalent metal cation-binding residues include H133, H137, and Y154. Residues 154–158 (YVSGG), D186, G201, E205, and N301 contribute to the substrate site. D330 contacts a divalent metal cation.

This sequence belongs to the KAE1 / TsaD family. Component of the EKC/KEOPS complex composed of at least BUD32, CGI121, GON7, KAE1 and PCC1; the whole complex dimerizes. The cofactor is a divalent metal cation.

It localises to the cytoplasm. The protein localises to the nucleus. It carries out the reaction L-threonylcarbamoyladenylate + adenosine(37) in tRNA = N(6)-L-threonylcarbamoyladenosine(37) in tRNA + AMP + H(+). In terms of biological role, component of the EKC/KEOPS complex that is required for the formation of a threonylcarbamoyl group on adenosine at position 37 (t(6)A37) in tRNAs that read codons beginning with adenine. The complex is probably involved in the transfer of the threonylcarbamoyl moiety of threonylcarbamoyl-AMP (TC-AMP) to the N6 group of A37. KAE1 likely plays a direct catalytic role in this reaction, but requires other protein(s) of the complex to fulfill this activity. The EKC/KEOPS complex also promotes both telomere uncapping and telomere elongation. The complex is required for efficient recruitment of transcriptional coactivators. This is tRNA N6-adenosine threonylcarbamoyltransferase from Candida albicans (strain SC5314 / ATCC MYA-2876) (Yeast).